We begin with the raw amino-acid sequence, 512 residues long: Serine--tRNA ligase, cytoplasmic (512 aa).

Met-1 carries the N-acetylmethionine modification. Residues 9-61 (RVDKGGDPALIRETQEKRFKDPGLVDQLVKADSEWRRCRFRADNLNKLKNLCS) form an interaction with tRNA region. Position 241 is a phosphoserine (Ser-241). Thr-271 and Arg-302 together coordinate L-serine. Residues 302-304 (RQE) and 318-321 (VHQF) contribute to the ATP site. Position 323 is an N6-acetyllysine (Lys-323). Position 325 (Glu-325) interacts with L-serine. Residue 391 to 394 (ELVS) coordinates ATP. An L-serine-binding site is contributed by Asn-427. The segment at 470-512 (FVKPAPIDQEPSKKQKKQHEGSKKKAKEVPLENQLQSMEVTEA) is disordered. Basic and acidic residues predominate over residues 479 to 499 (EPSKKQKKQHEGSKKKAKEVP). Residues 482 to 494 (KKQKKQHEGSKKK) carry the Nuclear localization signal motif. Residues 502–512 (NQLQSMEVTEA) are compositionally biased toward polar residues. The residue at position 506 (Ser-506) is a Phosphoserine.

Belongs to the class-II aminoacyl-tRNA synthetase family. Type-1 seryl-tRNA synthetase subfamily. In terms of assembly, homodimer. The tRNA molecule may bind across the dimer. Interacts with SIRT2. Interacts with METTL6; interaction is required for the tRNA N(3)-methylcytidine methyltransferase activity of METTL6.

The protein resides in the cytoplasm. Its subcellular location is the nucleus. The enzyme catalyses tRNA(Ser) + L-serine + ATP = L-seryl-tRNA(Ser) + AMP + diphosphate + H(+). The catalysed reaction is tRNA(Sec) + L-serine + ATP = L-seryl-tRNA(Sec) + AMP + diphosphate + H(+). The protein operates within aminoacyl-tRNA biosynthesis; selenocysteinyl-tRNA(Sec) biosynthesis; L-seryl-tRNA(Sec) from L-serine and tRNA(Sec): step 1/1. Functionally, catalyzes the attachment of serine to tRNA(Ser) in a two-step reaction: serine is first activated by ATP to form Ser-AMP and then transferred to the acceptor end of tRNA(Ser). Is probably also able to aminoacylate tRNA(Sec) with serine, to form the misacylated tRNA L-seryl-tRNA(Sec), which will be further converted into selenocysteinyl-tRNA(Sec). In the nucleus, binds to the VEGFA core promoter and prevents MYC binding and transcriptional activation by MYC. Recruits SIRT2 to the VEGFA promoter, promoting deacetylation of histone H4 at 'Lys-16' (H4K16). Thereby, inhibits the production of VEGFA and sprouting angiogenesis mediated by VEGFA. The chain is Serine--tRNA ligase, cytoplasmic (Sars1) from Mus musculus (Mouse).